The sequence spans 263 residues: Ribonuclease HII (263 aa).

Residues 71–262 (QAIAGIDEVG…VKSMCCDSTN (192 aa)) form the RNase H type-2 domain. A divalent metal cation contacts are provided by Asp77, Glu78, and Asp172.

The protein belongs to the RNase HII family. It depends on Mn(2+) as a cofactor. The cofactor is Mg(2+).

It is found in the cytoplasm. The enzyme catalyses Endonucleolytic cleavage to 5'-phosphomonoester.. Endonuclease that specifically degrades the RNA of RNA-DNA hybrids. This chain is Ribonuclease HII, found in Streptococcus pyogenes serotype M4 (strain MGAS10750).